The chain runs to 541 residues: Metal transporter Nramp6 (541 aa).

The span at 1 to 18 (MAPLPAAATATASSAATP) shows a compositional bias: low complexity. The segment at 1–44 (MAPLPAAATATASSAATPADDEAHSLLPSTPSNEEDDDDLEERA) is disordered. 12 helical membrane passes run 87–107 (LWLFTGPGFLMSIAFLDPGNL), 120–140 (TLLWLLLWATSMGLLVQLLAA), 172–192 (VAMVGADIQEVIGSAIAIKIL), 196–216 (FLPLWAGVVITALDCFIFLSL), 224–244 (LEAVFAILIATMAVSFAWMFT), 270–290 (AVGVVGCVIMPHNVFLHSALV), 316–336 (IALAVSFMINLFVTTVFAKGF), 358–378 (FGGGFFPILYIWGIGLLAAGQ), 404–424 (IRSLITRSFAIVPTIIVALFF), 436–456 (WLNVLQSIQIPFALIPLITLV), 474–494 (VTWTVATLLITINGYLLLDFF), and 502–522 (LSGSILCVAVLAYASFVLYLI).

The protein belongs to the NRAMP (TC 2.A.55) family.

It is found in the membrane. In terms of biological role, probable metal transporter. This Oryza sativa subsp. japonica (Rice) protein is Metal transporter Nramp6 (NRAMP6).